A 160-amino-acid polypeptide reads, in one-letter code: Cytochrome b6-f complex subunit 4 (160 aa).

A run of 3 helical transmembrane segments spans residues 36-56 (LLYMFPVVILGTFALSISLAV), 95-115 (LLGVLCMAAVPVGLITVPFIE), and 131-151 (TLFLFGTATAVWLGIGAALPI).

It belongs to the cytochrome b family. PetD subfamily. As to quaternary structure, the 4 large subunits of the cytochrome b6-f complex are cytochrome b6, subunit IV (17 kDa polypeptide, petD), cytochrome f and the Rieske protein, while the 4 small subunits are petG, petL, petM and petN. The complex functions as a dimer.

It localises to the plastid. It is found in the chloroplast thylakoid membrane. In terms of biological role, component of the cytochrome b6-f complex, which mediates electron transfer between photosystem II (PSII) and photosystem I (PSI), cyclic electron flow around PSI, and state transitions. This is Cytochrome b6-f complex subunit 4 from Oltmannsiellopsis viridis (Marine flagellate).